A 115-amino-acid chain; its full sequence is Large ribosomal subunit protein P2 (115 aa).

Met-1 is modified (N-acetylmethionine). Position 19 is a phosphoserine (Ser-19). Position 21 is an N6-acetyllysine; alternate (Lys-21). Lys-21 carries the post-translational modification N6-succinyllysine; alternate. Residues 76–90 (APGSAAPAAGSAPAA) show a composition bias toward low complexity. The tract at residues 76-115 (APGSAAPAAGSAPAAAEEKKDEKKEESEESDDDMGFGLFD) is disordered. Residues Ser-79 and Ser-86 each carry the phosphoserine modification. Residues 91-101 (AEEKKDEKKEE) are compositionally biased toward basic and acidic residues. Phosphoserine is present on residues Ser-102 and Ser-105.

It belongs to the eukaryotic ribosomal protein P1/P2 family. Heterodimer with RPLP1 at the lateral ribosomal stalk of the large ribosomal subunit.

In terms of biological role, plays an important role in the elongation step of protein synthesis. This Rattus norvegicus (Rat) protein is Large ribosomal subunit protein P2 (Rplp2).